The chain runs to 283 residues: Pantothenate synthetase (283 aa).

33-40 contributes to the ATP binding site; it reads MGALHEGH. The Proton donor role is filled by H40. Q64 provides a ligand contact to (R)-pantoate. Q64 provides a ligand contact to beta-alanine. 150 to 153 is a binding site for ATP; that stretch reads GEKD. Q156 provides a ligand contact to (R)-pantoate. ATP contacts are provided by residues I179 and 187–190; that span reads MSSR.

This sequence belongs to the pantothenate synthetase family. Homodimer.

The protein resides in the cytoplasm. The enzyme catalyses (R)-pantoate + beta-alanine + ATP = (R)-pantothenate + AMP + diphosphate + H(+). Its pathway is cofactor biosynthesis; (R)-pantothenate biosynthesis; (R)-pantothenate from (R)-pantoate and beta-alanine: step 1/1. Functionally, catalyzes the condensation of pantoate with beta-alanine in an ATP-dependent reaction via a pantoyl-adenylate intermediate. This Mesorhizobium japonicum (strain LMG 29417 / CECT 9101 / MAFF 303099) (Mesorhizobium loti (strain MAFF 303099)) protein is Pantothenate synthetase.